Here is a 450-residue protein sequence, read N- to C-terminus: Glucose-6-phosphate isomerase (450 aa).

Thr39 carries the phosphothreonine modification. Glu291 (proton donor) is an active-site residue. Active-site residues include His312 and Lys426.

It belongs to the GPI family.

The protein resides in the cytoplasm. It carries out the reaction alpha-D-glucose 6-phosphate = beta-D-fructose 6-phosphate. It participates in carbohydrate biosynthesis; gluconeogenesis. Its pathway is carbohydrate degradation; glycolysis; D-glyceraldehyde 3-phosphate and glycerone phosphate from D-glucose: step 2/4. In terms of biological role, catalyzes the reversible isomerization of glucose-6-phosphate to fructose-6-phosphate. The sequence is that of Glucose-6-phosphate isomerase from Bacillus thuringiensis (strain Al Hakam).